The following is a 329-amino-acid chain: Flotillin-like protein FloA (329 aa).

2 helical membrane passes run 5–25 (IFLL…LSFI) and 27–47 (LGLW…TLVG).

This sequence belongs to the flotillin-like FloA family. Homooligomerizes.

It is found in the cell membrane. Its subcellular location is the membrane raft. Its function is as follows. Found in functional membrane microdomains (FMM) that may be equivalent to eukaryotic membrane rafts. FMMs are highly dynamic and increase in number as cells age. Flotillins are thought to be important factors in membrane fluidity. This Thermoanaerobacter sp. (strain X514) protein is Flotillin-like protein FloA.